The sequence spans 592 residues: Membrane protein insertase YidC (592 aa).

A helical membrane pass occupies residues Asn-7 to Val-27. The tract at residues Ala-38–Gln-74 is disordered. Positions Ala-41 to Gly-69 are enriched in low complexity. 4 consecutive transmembrane segments (helical) span residues Leu-367–Phe-387, Trp-441–Ile-461, Leu-486–Ile-506, and Phe-530–Ile-550.

The protein belongs to the OXA1/ALB3/YidC family. Type 1 subfamily. As to quaternary structure, interacts with the Sec translocase complex via SecD. Specifically interacts with transmembrane segments of nascent integral membrane proteins during membrane integration.

It is found in the cell inner membrane. Functionally, required for the insertion and/or proper folding and/or complex formation of integral membrane proteins into the membrane. Involved in integration of membrane proteins that insert both dependently and independently of the Sec translocase complex, as well as at least some lipoproteins. Aids folding of multispanning membrane proteins. The polypeptide is Membrane protein insertase YidC (Sinorhizobium fredii (strain NBRC 101917 / NGR234)).